The chain runs to 238 residues: MTLNLAEYDVLVFDIEGTVCPISFVKDVLFPYALEALPKVLDQEWDSPEFAKYRDAFPEEYRNSRPDFEAHVRDLVKRDVKIAYLKSLQGYLWLQGYKSGDIVAPLFPDVDPFFNQAVKDGKKIIIYSSGSVPAQKLLFSHTNSEKSDMTPLIADYFDTTNAGPKTEVDSYRKIISSHPEHKDLGRWLFLSDNIHEVSAAVEAGIRSVPVIRDGNAPLPPDNSLTKLAISEFKHSEDA.

Residues D14 and E16 each coordinate Mg(2+). Substrate contacts are provided by residues S128–S129 and K165. Residue D192 coordinates Mg(2+).

The protein belongs to the HAD-like hydrolase superfamily. MasA/MtnC family. Monomer. Requires Mg(2+) as cofactor.

It is found in the cytoplasm. Its subcellular location is the nucleus. It catalyses the reaction 5-methylsulfanyl-2,3-dioxopentyl phosphate + H2O = 1,2-dihydroxy-5-(methylsulfanyl)pent-1-en-3-one + phosphate. The protein operates within amino-acid biosynthesis; L-methionine biosynthesis via salvage pathway; L-methionine from S-methyl-5-thio-alpha-D-ribose 1-phosphate: step 3/6. It functions in the pathway amino-acid biosynthesis; L-methionine biosynthesis via salvage pathway; L-methionine from S-methyl-5-thio-alpha-D-ribose 1-phosphate: step 4/6. Functionally, bifunctional enzyme that catalyzes the enolization of 2,3-diketo-5-methylthiopentyl-1-phosphate (DK-MTP-1-P) into the intermediate 2-hydroxy-3-keto-5-methylthiopentenyl-1-phosphate (HK-MTPenyl-1-P), which is then dephosphorylated to form the acireductone 1,2-dihydroxy-3-keto-5-methylthiopentene (DHK-MTPene). In Fusarium vanettenii (strain ATCC MYA-4622 / CBS 123669 / FGSC 9596 / NRRL 45880 / 77-13-4) (Fusarium solani subsp. pisi), this protein is Enolase-phosphatase E1.